The chain runs to 249 residues: ATP synthase subunit a, chloroplastic (249 aa).

A run of 5 helical transmembrane segments spans residues 40–60, 97–117, 136–156, 201–221, and 222–242; these read QVLI…VLAI, VPFI…GALL, INTT…AGLS, LVVV…VMFL, and GLFT…AYIG.

It belongs to the ATPase A chain family. F-type ATPases have 2 components, CF(1) - the catalytic core - and CF(0) - the membrane proton channel. CF(1) has five subunits: alpha(3), beta(3), gamma(1), delta(1), epsilon(1). CF(0) has four main subunits: a, b, b' and c.

It localises to the plastid. It is found in the chloroplast thylakoid membrane. Functionally, key component of the proton channel; it plays a direct role in the translocation of protons across the membrane. This Olimarabidopsis pumila (Dwarf rocket) protein is ATP synthase subunit a, chloroplastic.